A 186-amino-acid polypeptide reads, in one-letter code: ADP-ribosylation factor-like protein alp41 (186 aa).

Residue G2 is the site of N-myristoyl glycine attachment. GTP is bound by residues 23 to 30, 66 to 70, and 125 to 128; these read GLDNAGKT, DIGGQ, and NKSD.

This sequence belongs to the small GTPase superfamily. Arf family.

It is found in the cytoplasm. It localises to the cytoskeleton. In terms of biological role, has a role in the cofactor-dependent pathway of microtubule biogenesis. Required for growth polarity control. This is ADP-ribosylation factor-like protein alp41 (alp41) from Schizosaccharomyces pombe (strain 972 / ATCC 24843) (Fission yeast).